The primary structure comprises 206 residues: Regulator of rDNA transcription 14 (206 aa).

The disordered stretch occupies residues 178–206 (FVKDHRYPGLTPGLAPVGLSDEEDSSEED). A phosphoserine mark is found at Ser197, Ser202, and Ser203. Residues 197–206 (SDEEDSSEED) are compositionally biased toward acidic residues.

The protein belongs to the RRT14 family.

It is found in the nucleus. The protein resides in the nucleolus. Involved in ribosome biogenesis, probably through modulation of rDNA transcription. This is Regulator of rDNA transcription 14 (RRT14) from Saccharomyces cerevisiae (strain AWRI1631) (Baker's yeast).